The sequence spans 146 residues: Transcriptional regulator MraZ (146 aa).

SpoVT-AbrB domains follow at residues 9–55 (ASAL…PRPA) and 81–124 (AMDV…DVQR).

Belongs to the MraZ family. Forms oligomers.

The protein resides in the cytoplasm. It is found in the nucleoid. The protein is Transcriptional regulator MraZ of Methylibium petroleiphilum (strain ATCC BAA-1232 / LMG 22953 / PM1).